The following is a 547-amino-acid chain: Dihydroxy-acid dehydratase (547 aa).

A Mg(2+)-binding site is contributed by D78. Position 119 (C119) interacts with [2Fe-2S] cluster. The Mg(2+) site is built by D120 and K121. K121 is modified (N6-carboxylysine). A [2Fe-2S] cluster-binding site is contributed by C191. E439 provides a ligand contact to Mg(2+). S464 acts as the Proton acceptor in catalysis.

Belongs to the IlvD/Edd family. Homodimer. It depends on [2Fe-2S] cluster as a cofactor. Mg(2+) is required as a cofactor.

The enzyme catalyses (2R)-2,3-dihydroxy-3-methylbutanoate = 3-methyl-2-oxobutanoate + H2O. It catalyses the reaction (2R,3R)-2,3-dihydroxy-3-methylpentanoate = (S)-3-methyl-2-oxopentanoate + H2O. Its pathway is amino-acid biosynthesis; L-isoleucine biosynthesis; L-isoleucine from 2-oxobutanoate: step 3/4. The protein operates within amino-acid biosynthesis; L-valine biosynthesis; L-valine from pyruvate: step 3/4. Its function is as follows. Functions in the biosynthesis of branched-chain amino acids. Catalyzes the dehydration of (2R,3R)-2,3-dihydroxy-3-methylpentanoate (2,3-dihydroxy-3-methylvalerate) into 2-oxo-3-methylpentanoate (2-oxo-3-methylvalerate) and of (2R)-2,3-dihydroxy-3-methylbutanoate (2,3-dihydroxyisovalerate) into 2-oxo-3-methylbutanoate (2-oxoisovalerate), the penultimate precursor to L-isoleucine and L-valine, respectively. The sequence is that of Dihydroxy-acid dehydratase from Archaeoglobus fulgidus (strain ATCC 49558 / DSM 4304 / JCM 9628 / NBRC 100126 / VC-16).